Here is a 1621-residue protein sequence, read N- to C-terminus: Nestin (1621 aa).

N-acetylmethionine is present on Met1. A head region spans residues 1 to 7; it reads MEGCMGE. The interval 8 to 43 is coil 1A; that stretch reads ESFQMWELNRRLEAYLARVKALEEQNELLSAELGGL. Positions 8-313 constitute an IF rod domain; sequence ESFQMWELNR…TLLEAENSRL (306 aa). Residues 44 to 55 are linker 1; it reads RAQSADTSWRAH. The coil 1B stretch occupies residues 56 to 151; that stretch reads ADDELAALRA…VAHEEERVGL (96 aa). Residues 152 to 173 are linker 12; that stretch reads NAQAACAPRCPAPPRGPPAPAP. A coil 2A region spans residues 174 to 192; sequence EVEELARRLGEAWRGAVRG. The tract at residues 193–195 is linker 2; that stretch reads YQE. The tract at residues 196–313 is coil 2B; the sequence is RVAHMETSLG…TLLEAENSRL (118 aa). Position 311 is a phosphoserine (Ser311). The tail stretch occupies residues 314–1621; the sequence is QTPGGGSKTS…DRESWSSGED (1308 aa). Thr315 is subject to Phosphothreonine. Position 325 is a phosphoserine (Ser325). Thr338 carries the phosphothreonine modification. Ser355 and Ser358 each carry phosphoserine. The residue at position 388 (Thr388) is a Phosphothreonine. 12 positions are modified to phosphoserine: Ser398, Ser471, Ser476, Ser548, Ser564, Ser578, Ser588, Ser638, Ser680, Ser702, Ser746, and Ser768. Positions 439–490 are disordered; that stretch reads SVLPGPEEPGGQRQEASTGQSPEDHASLAPPLSPDHSSLEAKDGESGGSRVF. Residues 670 to 788 are disordered; that stretch reads LEKENQEPLR…PPEKVDLEPL (119 aa). 3 stretches are compositionally biased toward basic and acidic residues: residues 687–725, 736–770, and 779–788; these read EALR…LKTL, LETE…RSLG, and PPEKVDLEPL. A Phosphoserine modification is found at Ser790. Residue Lys811 forms a Glycyl lysine isopeptide (Lys-Gly) (interchain with G-Cter in SUMO1); alternate linkage. A Glycyl lysine isopeptide (Lys-Gly) (interchain with G-Cter in SUMO2); alternate cross-link involves residue Lys811. Ser820, Ser831, and Ser842 each carry phosphoserine. The residue at position 851 (Thr851) is a Phosphothreonine. Ser894, Ser905, Ser913, and Ser934 each carry phosphoserine. The disordered stretch occupies residues 895–1593; it reads LGAWNLENLR…GSALKTSWAG (699 aa). 4 stretches are compositionally biased toward basic and acidic residues: residues 904-936, 949-960, 980-994, and 1012-1024; these read RSPE…RSLE, QRWEDTVEKDQE, LNLR…KEEV, and GHPE…EQRG. Ser1016 is modified (phosphoserine). Low complexity predominate over residues 1085–1098; the sequence is GSEPAMGESAAGAE. Over residues 1099 to 1110 the composition is skewed to gly residues; sequence PGPGQGVGGLGD. 2 stretches are compositionally biased toward basic and acidic residues: residues 1129-1145 and 1159-1184; these read LEAK…KDLE and GKSR…RGAE. 8 positions are modified to phosphoserine: Ser1261, Ser1282, Ser1286, Ser1310, Ser1347, Ser1409, Ser1418, and Ser1452. Residues 1275–1292 show a composition bias toward acidic residues; it reads PQEEGEESREESEEDELG. A compositionally biased stretch (acidic residues) spans 1409-1428; that stretch reads SDGFADEEESGEEGEEDQEE. Low complexity-rich tracts occupy residues 1440–1453 and 1460–1470; these read GSSV…SSSQ and SDSVSVSVPWD. Polar residues predominate over residues 1486-1495; it reads ETESQDSAEP. 5 positions are modified to phosphoserine: Ser1496, Ser1498, Ser1577, Ser1617, and Ser1618.

The protein belongs to the intermediate filament family. As to quaternary structure, forms homodimers and homotetramers in vitro. In mixtures with other intermediate filament proteins such as vimentin and alpha-internexin, tis protein preferentially forms heterodimers which can assemble to form intermediate filaments if nestin does not exceed 25%. Interacts with FHOD3. In terms of processing, constitutively phosphorylated. This increases during mitosis when the cytoplasmic intermediate filament network is reorganized. In terms of tissue distribution, CNS stem cells.

In terms of biological role, required for brain and eye development. Promotes the disassembly of phosphorylated vimentin intermediate filaments (IF) during mitosis and may play a role in the trafficking and distribution of IF proteins and other cellular factors to daughter cells during progenitor cell division. Required for survival, renewal and mitogen-stimulated proliferation of neural progenitor cells. The sequence is that of Nestin (NES) from Homo sapiens (Human).